The primary structure comprises 30 residues: Protamine-YII (30 aa).

A disordered region spans residues 1–30 (PRRRTRRASRPVRRRRPRRVSRRRRARRRR).

In terms of tissue distribution, testis.

The protein resides in the nucleus. Its subcellular location is the chromosome. Protamines substitute for histones in the chromatin of sperm during the haploid phase of spermatogenesis. They compact sperm DNA into a highly condensed, stable and inactive complex. This is Protamine-YII from Clupea harengus (Atlantic herring).